A 107-amino-acid polypeptide reads, in one-letter code: IQ domain-containing protein F6 (107 aa).

The IQ domain occupies 42–71 (QEWAVVKVQAQVRMWQARRRFLQARQAACI).

The polypeptide is IQ domain-containing protein F6 (IQCF6) (Homo sapiens (Human)).